Here is a 181-residue protein sequence, read N- to C-terminus: Organelle RRM domain-containing protein 6, chloroplastic (181 aa).

The N-terminal 44 residues, 1 to 44 (MAISLGRVVVPSCTISGDRLFIPNFSAICSVSCGRINVGTGVIS), are a transit peptide targeting the chloroplast. The region spanning 77 to 155 (TKLYVSGLSF…RVIFVEEAKT (79 aa)) is the RRM domain. Positions 155 to 169 (TRSDMSRAKPRRDFP) are enriched in basic and acidic residues. The segment at 155-181 (TRSDMSRAKPRRDFPKPQSKPRTFRTW) is disordered.

In terms of assembly, interacts with MORF8/RIP1, MORF2/RIP2, MORF9/RIP9 and VAR3/OZ1.

It is found in the plastid. It localises to the chloroplast. In terms of biological role, involved in C-to-U editing of chloroplastic RNA. Required for the photosynthetic subunit psbF transcript editing in chloroplast. The chain is Organelle RRM domain-containing protein 6, chloroplastic from Arabidopsis thaliana (Mouse-ear cress).